A 555-amino-acid chain; its full sequence is Phosphoglucomutase (555 aa).

Residues T45, R49, 148 to 149 (SH), and K158 contribute to the substrate site. The Phosphoserine intermediate role is filled by S148. Position 148 (S148) interacts with Mg(2+). Residues D306, D308, and D310 each coordinate Mg(2+). Residues 310-311 (DR) and 393-395 (EES) each bind substrate.

Belongs to the phosphohexose mutase family. The cofactor is Mg(2+).

The enzyme catalyses alpha-D-glucose 1-phosphate = alpha-D-glucose 6-phosphate. Functionally, this enzyme participates in both the breakdown and synthesis of glucose. The sequence is that of Phosphoglucomutase (celB) from Komagataeibacter xylinus (Gluconacetobacter xylinus).